Here is a 705-residue protein sequence, read N- to C-terminus: MTVTASGGSSLARPQLYQTVPGSTIVQAEQQDRFPQQGELRELSSYFQSGLKRLAIAEIITRNSDTIVSRAANRIFVGGSPLAYIERPKVDPRNLRSAEEQRAREAKLGTVTFVESSGGGGFFSGLTAALGGAGAVRIPSGFRPINVARYGPRNMQKSLRDMSWFLRYITYAIVAGDPNILVVNVRGLREIIEKACSTPATLVALQDMRATSAGYFRNDPEAQQLVKDYFDVLIREFEAPTPSLKQRQRFAEDQQGLALPQSYANAAERRPKFVIKSTLSTVEKNEAIKAAYRQVFERDITRAYSQKVSDLESKVKNGEISTKEFIRRLGKSPLYRQQFHDRFVNSRVIELAFRHFLGRGISSAEEFTRYFDLLSAKGFAALIDALVDSQEYADYFGEETVPYLRGLGQEAQECRNWGVQQELFKYSAPFVKVPQFVTLFGEYKQPLLDQHPYGAGNDPLEIQFGAIFPSRTVNNRTNPAPFGKDTRRLLVSKGGVNNQVGSAAFQQSGTTPTKIFKLTQVAAGSSSIRSKSVGNPSIRQTESTTQAVIRAAYRQVFGRDLYEGQRLTVPEIKLENGEITVREFVRQIAKSETFRKLYWNNLYVVKAVEYIHRRLLGRPTTGRAEINAYFDISAKKGFYALVDAILDSPEYIAAFGEDTVPYERYITPKGLALRSVRGLEASEKVKASLRPAAGAQERRPEVGRR.

The tract at residues 18-76 (QTVPGSTIVQAEQQDRFPQQGELRELSSYFQSGLKRLAIAEIITRNSDTIVSRAANRIF) is phycobilin-like 1. The tract at residues 77–145 (VGGSPLAYIE…VRIPSGFRPI (69 aa)) is phycobilin-like loop. Residues 146–238 (NVARYGPRNM…YFDVLIREFE (93 aa)) form a phycobilin-like 2 region. A (2R,3E)-phycocyanobilin-binding site is contributed by cysteine 196. 2 consecutive PBS-linker domains span residues 253–433 (DQQG…FVKV) and 514–691 (KIFK…SLRP). Positions 685 to 705 (VKASLRPAAGAQERRPEVGRR) are disordered. Residues 696-705 (QERRPEVGRR) show a composition bias toward basic and acidic residues.

The protein belongs to the phycobilisome linker protein family. Phycobilisomes of this organism are composed of a two cylinder core, from which six rods radiate. The core is mainly composed of allophycocyanin alpha and beta chains, and of three minor components: the allophycocyanin alpha-B chain, a 18.3 kDa polypeptide, and the anchor polypeptide L-CM. Contains one covalently linked bilin chromophore. This protein autochromophorylates.

It is found in the cellular thylakoid membrane. This protein is postulated to act both as terminal energy acceptor (by its phycobilin-like domains) and as a linker polypeptide (by its repeats and arms) that stabilizes the phycobilisome core architecture. Has intrinsic bilin lyase activity. This Synechococcus sp. (strain ATCC 27144 / PCC 6301 / SAUG 1402/1) (Anacystis nidulans) protein is Phycobiliprotein ApcE (apcE).